The sequence spans 198 residues: Linker for activation of T-cells family member 2 (198 aa).

The Extracellular segment spans residues 1–4; that stretch reads MAQP. A helical; Signal-anchor for type III membrane protein membrane pass occupies residues 5–24; sequence ELLWAAAGLMLLGVAVSACV. 2 S-palmitoyl cysteine lipidation sites follow: Cys-23 and Cys-26. Residues 25-198 lie on the Cytoplasmic side of the membrane; the sequence is RCQLYATKRG…PTIDAVVLSK (174 aa). A phosphotyrosine mark is found at Tyr-136, Tyr-155, and Tyr-184.

As to quaternary structure, when phosphorylated, interacts with GRB2. Post-translationally, phosphorylated on tyrosines following cross-linking of BCR; which induces the recruitment of GRB2.

It is found in the cell membrane. Functionally, involved in BCR (B-cell antigen receptor)-mediated signaling in B-cells. May also be involved in FCER1 (high affinity immunoglobulin epsilon receptor)-mediated signaling in mast cells and FCGR1 (high affinity immunoglobulin gamma Fc receptor I)-mediated signaling in myeloid cells. Couples activation of these receptors and their associated kinases with distal intracellular events such as calcium mobilization through the recruitment of GRB2. The sequence is that of Linker for activation of T-cells family member 2 (LAT2) from Gallus gallus (Chicken).